A 430-amino-acid chain; its full sequence is Signal recognition particle receptor FtsY (430 aa).

Residues 75-95 (DTGELPAVGDDATVPRDSPRH) form a disordered region. GTP contacts are provided by residues 238–245 (GVNGTGKT), 320–324 (DTAGR), and 382–385 (TKLD).

Belongs to the GTP-binding SRP family. FtsY subfamily. As to quaternary structure, part of the signal recognition particle protein translocation system, which is composed of SRP and FtsY.

It is found in the cell membrane. The protein resides in the cytoplasm. The catalysed reaction is GTP + H2O = GDP + phosphate + H(+). Functionally, involved in targeting and insertion of nascent membrane proteins into the cytoplasmic membrane. Acts as a receptor for the complex formed by the signal recognition particle (SRP) and the ribosome-nascent chain (RNC). The sequence is that of Signal recognition particle receptor FtsY from Mycobacterium leprae (strain TN).